The sequence spans 371 residues: Transaldolase (371 aa).

Lys140 (schiff-base intermediate with substrate) is an active-site residue.

Belongs to the transaldolase family. Type 2 subfamily.

It is found in the cytoplasm. The catalysed reaction is D-sedoheptulose 7-phosphate + D-glyceraldehyde 3-phosphate = D-erythrose 4-phosphate + beta-D-fructose 6-phosphate. Its pathway is carbohydrate degradation; pentose phosphate pathway; D-glyceraldehyde 3-phosphate and beta-D-fructose 6-phosphate from D-ribose 5-phosphate and D-xylulose 5-phosphate (non-oxidative stage): step 2/3. Functionally, transaldolase is important for the balance of metabolites in the pentose-phosphate pathway. This is Transaldolase from Frankia alni (strain DSM 45986 / CECT 9034 / ACN14a).